A 540-amino-acid chain; its full sequence is Cytochrome P450 monooxygenase ptmG (540 aa).

A glycan (N-linked (GlcNAc...) asparagine) is linked at Asn-17. The next 2 helical transmembrane spans lie at 20–40 and 325–345; these read VMTLGQILVIPVALLVVYICI and AAFLIGATSGASVISYAFLLL. Cys-474 lines the heme pocket.

Belongs to the cytochrome P450 family. The cofactor is heme.

It is found in the membrane. It participates in secondary metabolite biosynthesis. In terms of biological role, cytochrome P450 monooxygenase; part of the gene cluster that mediates the biosynthesis of the indole diterpenes penitrems. The geranylgeranyl diphosphate (GGPP) synthase ptmG catalyzes the first step in penitrem biosynthesis via conversion of farnesyl pyrophosphate and isopentyl pyrophosphate into geranylgeranyl pyrophosphate (GGPP). Condensation of indole-3-glycerol phosphate with GGPP by the prenyl transferase ptmC then forms 3-geranylgeranylindole (3-GGI). Epoxidation by the FAD-dependent monooxygenase ptmM leads to a epoxidized-GGI that is substrate of the terpene cyclase ptmB for cyclization to yield paspaline. Paspaline is subsequently converted to 13-desoxypaxilline by the cytochrome P450 monooxygenase ptmP, the latter being then converted to paxilline by the cytochrome P450 monooxygenase ptmQ. Paxilline is converted to beta-paxitriol via C-10 ketoreduction by the short-chain dehydrogenase ptmH which can be monoprenylated at the C-20 by the indole diterpene prenyltransferase ptmD. A two-step elimination (acetylation and elimination) process performed by the O-acetyltransferase ptmV and ptmI leads to the production of the prenylated form of penijanthine. The FAD-linked oxidoreductase ptmO then converts the prenylated form of penijanthine into PC-M5 which is in turn transformed into PC-M4 by the aromatic dimethylallyltransferase ptmE. Five sequential oxidative transformations performed by the cytochrome P450 monooxygenases ptmK, ptmU, ptmL, ptmN and ptmJ yield the various penitrem compounds. PtmK, ptmU and ptmM are involved in the formation of the key bicyclic ring of penitrem C via the formation of the intermediates secopenitrem D and penitrem D. PtmL catalyzes the epoxidation of penitrem D and C to yield penitrem B and F, respectively. PtmJ catalyzes the last benzylic hydroxylation to convert penitrem B to prenitrem E and penitrem F to penitrem A. The polypeptide is Cytochrome P450 monooxygenase ptmG (Penicillium ochrochloron).